The primary structure comprises 231 residues: PIAGSMVLAAILLKLGGYGIIRMMQILPMTKTDVFLPFIILALWGAILANLTCLQQTDLKSLIAYSSISHMGLVVAAIMIQTPWGLSGAMALMIAHGFTSSALFCLANTTYERTHTRILILTRGFHNILPMTSTWWLLANLMNMATPPTLNFTSELLIMSTLFNWCPTTIILLGLSMLITASYSLHMFLSTQMGPTLLNNQTEPTHSREHLLMALHLVPLMMISMKPELII.

Helical transmembrane passes span 1 to 21, 34 to 54, 61 to 80, 84 to 106, 118 to 138, and 169 to 189; these read PIAG…YGII, VFLP…LTCL, SLIA…AIMI, WGLS…LFCL, ILIL…WWLL, and TIIL…HMFL.

It belongs to the complex I subunit 4 family.

It is found in the mitochondrion membrane. It carries out the reaction a ubiquinone + NADH + 5 H(+)(in) = a ubiquinol + NAD(+) + 4 H(+)(out). Core subunit of the mitochondrial membrane respiratory chain NADH dehydrogenase (Complex I) that is believed to belong to the minimal assembly required for catalysis. Complex I functions in the transfer of electrons from NADH to the respiratory chain. The immediate electron acceptor for the enzyme is believed to be ubiquinone. This chain is NADH-ubiquinone oxidoreductase chain 4 (MT-ND4), found in Porthidium nasutum (Hognosed pitviper).